Consider the following 295-residue polypeptide: Glycine N-phenylacetyltransferase (295 aa).

Lysine 43 carries the N6-acetyllysine modification. Lysine 48 bears the N6-acetyllysine; alternate mark. Lysine 48 carries the post-translational modification N6-succinyllysine; alternate. N6-acetyllysine is present on lysine 80. Position 182 is an N6-acetyllysine; alternate (lysine 182). Lysine 182 is modified (N6-succinyllysine; alternate).

It belongs to the glycine N-acyltransferase family.

The protein localises to the mitochondrion. It carries out the reaction phenylacetyl-CoA + glycine = phenylacetylglycine + CoA + H(+). Functionally, mitochondrial acyltransferase which transfers the acyl group to the N-terminus of glycine. Can conjugate a multitude of substrates to form a variety of N-acylglycines. Catalyzes the conjugation of arylacetic acids with glycine but does not have activity towards any alkyl-CoA. This chain is Glycine N-phenylacetyltransferase, found in Bos taurus (Bovine).